The chain runs to 142 residues: 3-hydroxyacyl-[acyl-carrier-protein] dehydratase FabZ (142 aa).

H48 is a catalytic residue.

Belongs to the thioester dehydratase family. FabZ subfamily.

Its subcellular location is the cytoplasm. It catalyses the reaction a (3R)-hydroxyacyl-[ACP] = a (2E)-enoyl-[ACP] + H2O. In terms of biological role, involved in unsaturated fatty acids biosynthesis. Catalyzes the dehydration of short chain beta-hydroxyacyl-ACPs and long chain saturated and unsaturated beta-hydroxyacyl-ACPs. The chain is 3-hydroxyacyl-[acyl-carrier-protein] dehydratase FabZ from Natranaerobius thermophilus (strain ATCC BAA-1301 / DSM 18059 / JW/NM-WN-LF).